The chain runs to 297 residues: Lipoprotein NlpD/LppB homolog (297 aa).

Positions 1–22 (MDKGEGLRLAATLRQWTRLYGG) are cleaved as a signal peptide. The N-palmitoyl cysteine moiety is linked to residue Cys23. Cys23 is lipidated: S-diacylglycerol cysteine. The LysM domain occupies 67-111 (GQYIVRRGDTLYSIAFRFGWDWKALAARNGIAPPYTIQVGQAIQF). Residues 134–168 (TKPTPVPPAVSTSVPAKPAPAPASTTTPPSSGATP) form a disordered region.

It belongs to the E.coli NlpD/Haemophilus LppB family.

Its subcellular location is the cell inner membrane. The chain is Lipoprotein NlpD/LppB homolog from Pseudomonas aeruginosa (strain ATCC 15692 / DSM 22644 / CIP 104116 / JCM 14847 / LMG 12228 / 1C / PRS 101 / PAO1).